A 309-amino-acid chain; its full sequence is Ribosomal RNA small subunit methyltransferase H (309 aa).

S-adenosyl-L-methionine-binding positions include 33-35 (GGH), Asp53, Phe79, Asp100, and Gln107.

This sequence belongs to the methyltransferase superfamily. RsmH family.

It localises to the cytoplasm. It catalyses the reaction cytidine(1402) in 16S rRNA + S-adenosyl-L-methionine = N(4)-methylcytidine(1402) in 16S rRNA + S-adenosyl-L-homocysteine + H(+). In terms of biological role, specifically methylates the N4 position of cytidine in position 1402 (C1402) of 16S rRNA. This Clostridium botulinum (strain ATCC 19397 / Type A) protein is Ribosomal RNA small subunit methyltransferase H.